A 329-amino-acid chain; its full sequence is Biotin synthase (329 aa).

The region spanning 38–262 is the Radical SAM core domain; that stretch reads NTIQVSTLLS…IMPHSYIRLS (225 aa). The [4Fe-4S] cluster site is built by Cys-53, Cys-57, and Cys-60. Residues Cys-97, Cys-128, Cys-188, and Arg-260 each contribute to the [2Fe-2S] cluster site.

This sequence belongs to the radical SAM superfamily. Biotin synthase family. As to quaternary structure, homodimer. [4Fe-4S] cluster is required as a cofactor. The cofactor is [2Fe-2S] cluster.

It carries out the reaction (4R,5S)-dethiobiotin + (sulfur carrier)-SH + 2 reduced [2Fe-2S]-[ferredoxin] + 2 S-adenosyl-L-methionine = (sulfur carrier)-H + biotin + 2 5'-deoxyadenosine + 2 L-methionine + 2 oxidized [2Fe-2S]-[ferredoxin]. It functions in the pathway cofactor biosynthesis; biotin biosynthesis; biotin from 7,8-diaminononanoate: step 2/2. Its function is as follows. Catalyzes the conversion of dethiobiotin (DTB) to biotin by the insertion of a sulfur atom into dethiobiotin via a radical-based mechanism. This chain is Biotin synthase, found in Acinetobacter calcoaceticus.